A 365-amino-acid polypeptide reads, in one-letter code: Peptide chain release factor 2 (365 aa).

Gln252 carries the N5-methylglutamine modification.

This sequence belongs to the prokaryotic/mitochondrial release factor family. Post-translationally, methylated by PrmC. Methylation increases the termination efficiency of RF2.

The protein resides in the cytoplasm. Peptide chain release factor 2 directs the termination of translation in response to the peptide chain termination codons UGA and UAA. In Escherichia coli O9:H4 (strain HS), this protein is Peptide chain release factor 2.